We begin with the raw amino-acid sequence, 565 residues long: DNA-dependent metalloprotease SPRTN (565 aa).

The region spanning 23 to 130 is the SprT-like domain; the sequence is RALFLEFNDT…RTGANISVYH (108 aa). Histidine 88 contributes to the Zn(2+) binding site. Residue glutamate 89 is part of the active site. Residues histidine 92 and histidine 107 each coordinate Zn(2+). Residues 191–219 form a disordered region; it reads EPENYPQKRKRKNDPTISEVNSSSHVKGK. Residues 205–215 are compositionally biased toward polar residues; sequence PTISEVNSSSH. Residues 231–239 carry the SHP-box motif; sequence FSGTGYKLF. Residues 288-295 carry the PIP-box motif; that stretch reads STPAQSIL. A disordered region spans residues 349–389; sequence TLPSPSIQSTSQKPQKDISFGFTLPSQSFPSTSPGSNSENK. Polar residues-rich tracts occupy residues 351–361 and 372–386; these read PSPSIQSTSQK and LPSQ…GSNS. A UBZ4-type 1 zinc finger spans residues 436 to 463; it reads KVSCPVCGTEVLECKINDHLDTCTSSGP. Zn(2+) is bound by residues cysteine 439, cysteine 442, histidine 454, and cysteine 458. The Nuclear localization signal motif lies at 476–499; it reads QSFPSTSQGSNSAIKEPLYKKLQI. A UBZ4-type 2 zinc finger spans residues 537–564; sequence KVCCPVCGTDVLQDKINDHLDTCLQNCN. 4 residues coordinate Zn(2+): cysteine 540, cysteine 543, histidine 555, and cysteine 559.

The protein belongs to the Spartan family. As to quaternary structure, homodimer. The cofactor is Zn(2+). Autocatalytically cleaved in response to double-stranded DNA-binding: autocatalytic cleavage takes place in trans and leads to inactivation.

It is found in the nucleus. The protein localises to the chromosome. DNA-binding activates the protease activity: single-stranded DNA-binding specifically activates ability to cleave covalent DNA-protein cross-links (DPCs). In contrast, double-stranded DNA-binding specifically activates autocatalytic cleavage, and subsequent inactivation. In terms of biological role, DNA-dependent metalloendopeptidase that mediates the proteolytic cleavage of covalent DNA-protein cross-links (DPCs) during DNA synthesis, thereby playing a key role in maintaining genomic integrity. DPCs are highly toxic DNA lesions that interfere with essential chromatin transactions, such as replication and transcription, and which are induced by reactive agents, such as UV light or formaldehyde. Associates with the DNA replication machinery and specifically removes DPCs during DNA synthesis. Catalyzes proteolytic cleavage of the hmces DNA-protein cross-link following unfolding by the brip1/fancj helicase. Acts as a pleiotropic protease for DNA-binding proteins cross-linked with DNA, such as top1, top2a, histones H3 and H4. Mediates degradation of DPCs that are not ubiquitinated, while it is not able to degrade ubiquitinated DPCs. SPRTN activation requires polymerase collision with DPCs followed by helicase bypass of DPCs. May also act as a 'reader' of ubiquitinated pcna: facilitates chromatin association of rad18 and is required for efficient pcna monoubiquitination, promoting a feed-forward loop to enhance pcna ubiquitination and translesion DNA synthesis. Acts as a regulator of translesion DNA synthesis by recruiting vcp/p97 to sites of DNA damage. This is DNA-dependent metalloprotease SPRTN from Xenopus laevis (African clawed frog).